A 936-amino-acid polypeptide reads, in one-letter code: UPF0746 protein DDB_G0280787 (936 aa).

The segment covering Met1 to Asp19 has biased composition (basic and acidic residues). Positions Met1–Asn30 are disordered. In terms of domain architecture, SAP spans Ser44–Phe78. Residues Glu91–Glu110 are disordered.

The protein belongs to the UPF0746 family.

The chain is UPF0746 protein DDB_G0280787 from Dictyostelium discoideum (Social amoeba).